Reading from the N-terminus, the 244-residue chain is Meiotic drive suppressor wtf2 (244 aa).

The span at 1–10 (MKNNYTSLKS) shows a compositional bias: polar residues. Residues 1 to 68 (MKNNYTSLKS…RENNPSRSTD (68 aa)) form a disordered region. A compositionally biased stretch (basic and acidic residues) spans 17-30 (ELKTDHEIDLEKGP). Helical transmembrane passes span 73-93 (FLIK…LAIC), 110-130 (WTLF…LTYF), 149-169 (WENM…VGSP), and 183-203 (LKWS…VFIA).

It belongs to the WTF family. In terms of assembly, homomer. Interacts with other proteins that exhibit high sequence similarity.

The protein resides in the spore membrane. Its subcellular location is the vacuole membrane. In terms of biological role, acts as a suppressor component of the dual wtf meiotic drive system, and can suppress but not confer meiotic drive by compatible poisons. Wtf meiotic drive systems promote unequal transmission of alleles from the parental zygote to progeny spores by encoding a poison and an antidote from the same locus; the poison is trans-acting and forms toxic aggregates in all spores within an ascus, wherease the antidote is spore-specific and targets aggregates for degradation by the vacuole. Meiotic drive by wtf systems therefore lead to poisoning of all progeny that do not inherit the dual poison/antidote allele, or express a compatible antidote. This Schizosaccharomyces kambucha (Fission yeast) protein is Meiotic drive suppressor wtf2.